The chain runs to 284 residues: GPN-loop GTPase 3 (284 aa).

13–18 (GSGKST) is a GTP binding site. The short motif at 72–74 (GPN) is the Gly-Pro-Asn (GPN)-loop; involved in dimer interface element. 174 to 177 (TKMD) serves as a coordination point for GTP.

It belongs to the GPN-loop GTPase family. Heterodimer with GPN1. Binds to RNA polymerase II (RNAPII). Interacts directly with subunits RPB4 and RPB7 and the CTD of RPB1.

Small GTPase required for proper localization of RNA polymerase II (RNAPII). May act at an RNAP assembly step prior to nuclear import. This chain is GPN-loop GTPase 3, found in Homo sapiens (Human).